The sequence spans 261 residues: Short chain dehydrogenase/reductase astE (261 aa).

NADP(+)-binding residues include Ile24, Asp70, Asn97, and Lys131. Catalysis depends on proton donor residues Ser150 and Tyr164. Positions 164, 168, 197, and 199 each coordinate NADP(+). Lys168 (lowers pKa of active site Tyr) is an active-site residue.

This sequence belongs to the short-chain dehydrogenases/reductases (SDR) family.

The protein operates within secondary metabolite biosynthesis; terpenoid biosynthesis. Functionally, short chain dehydrogenase/reductase; part of the gene cluster that mediates the biosynthesis of astellolides, drimane-type sesquiterpene esters that show antimicrobial, anti-inflammatory, and anti-tumor activities. The first step in astellolide biosynthesis is performed by the sesquiterpene cyclase astC that catalyzes the formation of drimanyl pyrophosphate from farnesyl pyrophosphate. Drimanyl pyrophosphate is then dephosphorylated by the sesquiterpene phosphatase astI to produce drimanyl monophosphate which is further dephosphorylated to drim-8-ene-11-ol by atsK. Drim-8-ene-11-ol is converted to confertifolin, probably by the cytochrome P450 monooxygenase astD and/or the dehydrogenase astE. The cytochrome P450 monooxygenases astB, astF and astJ then hydroxylate confertifolin at C6, C14, or C15 to form trihydroxy confertifolin. The nonribosomal peptide synthetase astA catalyzes ester bond formation between trihydroxy contifolin and benzoic acid (BA) or 4-hydroxy benzoic acid (4HBA), leading to the formation of dideacetyl astellolides A and B, respectively. Finally, the O-acetyltransferase astG converts dideacetyl astellolides A and B into deacetyl astellolides A and B. The protein is Short chain dehydrogenase/reductase astE of Aspergillus oryzae (strain ATCC 42149 / RIB 40) (Yellow koji mold).